We begin with the raw amino-acid sequence, 121 residues long: Inner membrane protein YhaH (121 aa).

Residues 1–23 (MDWYLKVLKNYVGFRGRARRKEY) lie on the Periplasmic side of the membrane. The chain crosses the membrane as a helical span at residues 24–44 (WMFILVNIIFTFVLGLLDKML). Topologically, residues 45 to 49 (GWQRA) are cytoplasmic. A helical membrane pass occupies residues 50–70 (GGEGILTTIYGILVFLPWWAV). Residues 71-80 (QFRRLHDTDR) are Periplasmic-facing. A helical transmembrane segment spans residues 81–101 (SAWWALLFLIPFIGWLIIIVF). At 102-121 (NCQAGTPGENRFGPDPKLEP) the chain is on the cytoplasmic side.

This sequence to E.coli YhaI.

Its subcellular location is the cell inner membrane. This is Inner membrane protein YhaH (yhaH) from Escherichia coli O157:H7.